The following is a 293-amino-acid chain: Protease HtpX (293 aa).

2 consecutive transmembrane segments (helical) span residues 4-24 (IALF…VLSL) and 34-54 (GLMI…LLMS). H139 is a Zn(2+) binding site. The active site involves E140. H143 is a Zn(2+) binding site. Transmembrane regions (helical) follow at residues 158-178 (IVNT…AGFL) and 193-213 (MVYF…ASII). E222 serves as a coordination point for Zn(2+).

It belongs to the peptidase M48B family. The cofactor is Zn(2+).

It is found in the cell inner membrane. In Yersinia enterocolitica serotype O:8 / biotype 1B (strain NCTC 13174 / 8081), this protein is Protease HtpX.